Consider the following 507-residue polypeptide: Anthranilate synthase component 1 (507 aa).

S65 contributes to the L-tryptophan binding site. S81 bears the Phosphoserine mark. Phosphothreonine is present on T223. An L-tryptophan-binding site is contributed by 280-282 (PYL). Residue 316–317 (GT) coordinates chorismate. E343 serves as a coordination point for Mg(2+). Chorismate is bound by residues Y431, R452, 466–468 (GGG), and G468. E481 is a binding site for Mg(2+).

The protein belongs to the anthranilate synthase component I family. Tetramer of two components I and two components II. The cofactor is Mg(2+).

The catalysed reaction is chorismate + L-glutamine = anthranilate + pyruvate + L-glutamate + H(+). The protein operates within amino-acid biosynthesis; L-tryptophan biosynthesis; L-tryptophan from chorismate: step 1/5. In Saccharomyces cerevisiae (strain ATCC 204508 / S288c) (Baker's yeast), this protein is Anthranilate synthase component 1 (TRP2).